Here is a 249-residue protein sequence, read N- to C-terminus: 1-(5-phosphoribosyl)-5-[(5-phosphoribosylamino)methylideneamino] imidazole-4-carboxamide isomerase (249 aa).

D8 functions as the Proton acceptor in the catalytic mechanism. Catalysis depends on D129, which acts as the Proton donor.

The protein belongs to the HisA/HisF family.

It is found in the cytoplasm. The catalysed reaction is 1-(5-phospho-beta-D-ribosyl)-5-[(5-phospho-beta-D-ribosylamino)methylideneamino]imidazole-4-carboxamide = 5-[(5-phospho-1-deoxy-D-ribulos-1-ylimino)methylamino]-1-(5-phospho-beta-D-ribosyl)imidazole-4-carboxamide. The protein operates within amino-acid biosynthesis; L-histidine biosynthesis; L-histidine from 5-phospho-alpha-D-ribose 1-diphosphate: step 4/9. The polypeptide is 1-(5-phosphoribosyl)-5-[(5-phosphoribosylamino)methylideneamino] imidazole-4-carboxamide isomerase (Magnetococcus marinus (strain ATCC BAA-1437 / JCM 17883 / MC-1)).